A 562-amino-acid polypeptide reads, in one-letter code: Apical membrane antigen 1 (562 aa).

Positions 1 to 21 are cleaved as a signal peptide; that stretch reads MNKIYCILFLSAQCLVHMGKC. Over 22–484 the chain is Extracellular; the sequence is EPNQKPSRLT…QYAQGESKNQ (463 aa). 2 N-linked (GlcNAc...) asparagine glycosylation sites follow: Asn-84 and Asn-176. 8 cysteine pairs are disulfide-bonded: Cys-94/Cys-247, Cys-162/Cys-192, Cys-208/Cys-220, Cys-265/Cys-363, Cys-282/Cys-354, Cys-388/Cys-444, Cys-432/Cys-449, and Cys-434/Cys-451. Asn-226 carries an N-linked (GlcNAc...) asparagine glycan. N-linked (GlcNAc...) asparagine glycans are attached at residues Asn-405 and Asn-441. Residues 485–507 form a helical membrane-spanning segment; it reads MLLIIIGITGGVCVVALASMFYF. Topologically, residues 508-562 are cytoplasmic; sequence RKKAHNDKYDKMEQADGYGKPTTRKDEMLDPEASFWGEEKRASHTTPVLMEKPYY. Residues 519-543 form a disordered region; that stretch reads MEQADGYGKPTTRKDEMLDPEASFW.

It belongs to the apicomplexan parasites AMA1 family.

The protein resides in the membrane. Functionally, involved in parasite invasion of erythrocytes. In Plasmodium fragile, this protein is Apical membrane antigen 1 (AMA-1).